The following is a 540-amino-acid chain: Glucose-6-phosphate isomerase (540 aa).

The active-site Proton donor is the Glu350. Catalysis depends on residues His381 and Lys503.

Belongs to the GPI family.

Its subcellular location is the cytoplasm. It catalyses the reaction alpha-D-glucose 6-phosphate = beta-D-fructose 6-phosphate. It functions in the pathway carbohydrate biosynthesis; gluconeogenesis. It participates in carbohydrate degradation; glycolysis; D-glyceraldehyde 3-phosphate and glycerone phosphate from D-glucose: step 2/4. In terms of biological role, catalyzes the reversible isomerization of glucose-6-phosphate to fructose-6-phosphate. This Burkholderia multivorans (strain ATCC 17616 / 249) protein is Glucose-6-phosphate isomerase.